Here is a 191-residue protein sequence, read N- to C-terminus: Potassium-transporting ATPase KdpC subunit (191 aa).

The helical transmembrane segment at 10–30 (ITLVFCVFFSVFYILVLWLFA) threads the bilayer.

The protein belongs to the KdpC family. As to quaternary structure, the system is composed of three essential subunits: KdpA, KdpB and KdpC.

The protein localises to the cell inner membrane. Part of the high-affinity ATP-driven potassium transport (or Kdp) system, which catalyzes the hydrolysis of ATP coupled with the electrogenic transport of potassium into the cytoplasm. This subunit acts as a catalytic chaperone that increases the ATP-binding affinity of the ATP-hydrolyzing subunit KdpB by the formation of a transient KdpB/KdpC/ATP ternary complex. The sequence is that of Potassium-transporting ATPase KdpC subunit from Bacteroides fragilis (strain ATCC 25285 / DSM 2151 / CCUG 4856 / JCM 11019 / LMG 10263 / NCTC 9343 / Onslow / VPI 2553 / EN-2).